A 299-amino-acid polypeptide reads, in one-letter code: Glutamyl-Q tRNA(Asp) synthetase (299 aa).

L-glutamate contacts are provided by residues 9–13 and Glu-45; that span reads RFAPS. A 'HIGH' region motif is present at residues 12-22; the sequence is PSPTGPLHFGS. Zn(2+) contacts are provided by Cys-101, Cys-103, and Cys-118. Positions 170 and 188 each coordinate L-glutamate. The short motif at 226-230 is the 'KMSKS' region element; sequence KLSKS. Lys-229 is an ATP binding site.

It belongs to the class-I aminoacyl-tRNA synthetase family. GluQ subfamily. Zn(2+) serves as cofactor.

Functionally, catalyzes the tRNA-independent activation of glutamate in presence of ATP and the subsequent transfer of glutamate onto a tRNA(Asp). Glutamate is transferred on the 2-amino-5-(4,5-dihydroxy-2-cyclopenten-1-yl) moiety of the queuosine in the wobble position of the QUC anticodon. The chain is Glutamyl-Q tRNA(Asp) synthetase from Xanthomonas axonopodis pv. citri (strain 306).